Reading from the N-terminus, the 564-residue chain is Dihydroxy-acid dehydratase (564 aa).

Position 80 (Asp80) interacts with Mg(2+). Residue Cys121 participates in [2Fe-2S] cluster binding. Mg(2+) contacts are provided by Asp122 and Lys123. Lys123 is modified (N6-carboxylysine). A [2Fe-2S] cluster-binding site is contributed by Cys194. Mg(2+) is bound at residue Glu447. The active-site Proton acceptor is Ser473.

It belongs to the IlvD/Edd family. As to quaternary structure, homodimer. [2Fe-2S] cluster serves as cofactor. Requires Mg(2+) as cofactor.

The enzyme catalyses (2R)-2,3-dihydroxy-3-methylbutanoate = 3-methyl-2-oxobutanoate + H2O. It catalyses the reaction (2R,3R)-2,3-dihydroxy-3-methylpentanoate = (S)-3-methyl-2-oxopentanoate + H2O. Its pathway is amino-acid biosynthesis; L-isoleucine biosynthesis; L-isoleucine from 2-oxobutanoate: step 3/4. It participates in amino-acid biosynthesis; L-valine biosynthesis; L-valine from pyruvate: step 3/4. Its function is as follows. Functions in the biosynthesis of branched-chain amino acids. Catalyzes the dehydration of (2R,3R)-2,3-dihydroxy-3-methylpentanoate (2,3-dihydroxy-3-methylvalerate) into 2-oxo-3-methylpentanoate (2-oxo-3-methylvalerate) and of (2R)-2,3-dihydroxy-3-methylbutanoate (2,3-dihydroxyisovalerate) into 2-oxo-3-methylbutanoate (2-oxoisovalerate), the penultimate precursor to L-isoleucine and L-valine, respectively. This Listeria monocytogenes serotype 4b (strain CLIP80459) protein is Dihydroxy-acid dehydratase.